An 83-amino-acid chain; its full sequence is Hainantoxin-III 12 (83 aa).

Positions 1 to 21 (MKASMFLALAGLVLLFVVGYA) are cleaved as a signal peptide. A propeptide spanning residues 22-48 (SGSEEKEFPRELLSKIFAVDDFKGEER) is cleaved from the precursor. Intrachain disulfides connect Cys-50–Cys-65, Cys-57–Cys-70, and Cys-64–Cys-77. Leu-81 is modified (leucine amide).

The protein belongs to the neurotoxin 10 (Hwtx-1) family. 15 (Hntx-3) subfamily. As to quaternary structure, monomer. As to expression, expressed by the venom gland.

Its subcellular location is the secreted. Its function is as follows. Selective antagonist of neuronal tetrodotoxin (TTX)-sensitive voltage-gated sodium channels (IC(50)=1270 nM on Nav1.1/SCN1A, 270 nM on Nav1.2/SCN2A, 491 nM on Nav1.3/SCN3A and 232 nM on Nav1.7/SCN9A). This toxin suppress Nav1.7 current amplitude without significantly altering the activation, inactivation, and repriming kinetics. Short extreme depolarizations partially activate the toxin-bound channel, indicating voltage-dependent inhibition of this toxin. This toxin increases the deactivation of the Nav1.7 current after extreme depolarizations. The toxin-Nav1.7 complex is gradually dissociated upon prolonged strong depolarizations in a voltage-dependent manner, and the unbound toxin rebinds to Nav1.7 after a long repolarization. Moreover, analysis of chimeric channels showed that the DIIS3-S4 linker is critical for toxin binding to Nav1.7. These data are consistent with this toxin interacting with Nav1.7 site 4 and trapping the domain II voltage sensor in the closed state. This is Hainantoxin-III 12 from Cyriopagopus hainanus (Chinese bird spider).